The following is a 71-amino-acid chain: Small ribosomal subunit protein bS21 (71 aa).

Residues 48-59 show a composition bias toward basic residues; it reads EKASLAKRHAKR. Positions 48–71 are disordered; the sequence is EKASLAKRHAKRNFRENARNTRLY. Over residues 60 to 71 the composition is skewed to basic and acidic residues; sequence NFRENARNTRLY.

It belongs to the bacterial ribosomal protein bS21 family.

The protein is Small ribosomal subunit protein bS21 of Glaesserella parasuis serovar 5 (strain SH0165) (Haemophilus parasuis).